We begin with the raw amino-acid sequence, 227 residues long: Mediator of RNA polymerase II transcription subunit 18 (227 aa).

It belongs to the Mediator complex subunit 18 family. In terms of assembly, component of the Mediator complex.

The protein localises to the nucleus. Functionally, component of the Mediator complex, a coactivator involved in the regulated transcription of nearly all RNA polymerase II-dependent genes. Mediator functions as a bridge to convey information from gene-specific regulatory proteins to the basal RNA polymerase II transcription machinery. Mediator is recruited to promoters by direct interactions with regulatory proteins and serves as a scaffold for the assembly of a functional preinitiation complex with RNA polymerase II and the general transcription factors. This Caenorhabditis briggsae protein is Mediator of RNA polymerase II transcription subunit 18 (mdt-18).